A 276-amino-acid chain; its full sequence is NH(3)-dependent NAD(+) synthetase (276 aa).

Glycine 39 to serine 46 is an ATP binding site. Aspartate 45 serves as a coordination point for Mg(2+). Arginine 123 is a binding site for deamido-NAD(+). An ATP-binding site is contributed by threonine 143. Residue glutamate 148 participates in Mg(2+) binding. The deamido-NAD(+) site is built by lysine 156 and aspartate 163. Residues lysine 172 and serine 194 each coordinate ATP. Histidine 254 to lysine 255 contributes to the deamido-NAD(+) binding site.

The protein belongs to the NAD synthetase family. In terms of assembly, homodimer.

The enzyme catalyses deamido-NAD(+) + NH4(+) + ATP = AMP + diphosphate + NAD(+) + H(+). Its pathway is cofactor biosynthesis; NAD(+) biosynthesis; NAD(+) from deamido-NAD(+) (ammonia route): step 1/1. Functionally, catalyzes the ATP-dependent amidation of deamido-NAD to form NAD. Uses ammonia as a nitrogen source. The protein is NH(3)-dependent NAD(+) synthetase of Hyperthermus butylicus (strain DSM 5456 / JCM 9403 / PLM1-5).